The following is a 741-amino-acid chain: Ethylene receptor 2 (741 aa).

Helical transmembrane passes span 23–43, 53–73, and 92–112; these read ISDFFIAIAYFSIPLELIYFV, WVLVQFGAFIVLCGATHLINL, and IMTAVVSCATALMLVHIIPDL. Cu cation is bound by residues C65 and H69. Residues 158-307 enclose the GAF domain; sequence DRHTILKTTL…VVADQVAVAL (150 aa). Residues 350-589 form the Histidine kinase domain; sequence VMNHEMRTPM…TFVVKLGIPE (240 aa). H353 bears the Phosphohistidine; by autocatalysis mark. The Response regulatory domain maps to 615–732; the sequence is KVLLLDDNGV…KMRNVLSNLL (118 aa). D663 is modified (4-aspartylphosphate).

It belongs to the ethylene receptor family. As to quaternary structure, homodimer; disulfide-linked. Requires Cu cation as cofactor. Post-translationally, activation probably requires a transfer of a phosphate group between a His in the transmitter domain and an Asp of the receiver domain.

It is found in the endoplasmic reticulum membrane. It carries out the reaction ATP + protein L-histidine = ADP + protein N-phospho-L-histidine.. Functionally, may act early in the ethylene signal transduction pathway, possibly as an ethylene receptor, or as a regulator of the pathway. This is Ethylene receptor 2 (ETR2) from Pelargonium hortorum (Common geranium).